Reading from the N-terminus, the 81-residue chain is Sulfur carrier protein TusA (81 aa).

The active-site Cysteine persulfide intermediate is the Cys-19.

Belongs to the sulfur carrier protein TusA family.

It is found in the cytoplasm. Sulfur carrier protein which probably makes part of a sulfur-relay system. The chain is Sulfur carrier protein TusA from Shewanella baltica (strain OS185).